The chain runs to 205 residues: Large ribosomal subunit protein uL3 (205 aa).

Positions 126-150 are disordered; sequence GGPKTHGQSDRHRAPGSISSTTTPG.

The protein belongs to the universal ribosomal protein uL3 family. In terms of assembly, part of the 50S ribosomal subunit. Forms a cluster with proteins L14 and L19.

In terms of biological role, one of the primary rRNA binding proteins, it binds directly near the 3'-end of the 23S rRNA, where it nucleates assembly of the 50S subunit. This Dehalococcoides mccartyi (strain ATCC BAA-2266 / KCTC 15142 / 195) (Dehalococcoides ethenogenes (strain 195)) protein is Large ribosomal subunit protein uL3.